Here is a 233-residue protein sequence, read N- to C-terminus: Phosphatidylserine decarboxylase proenzyme (233 aa).

Ser188 acts as the Schiff-base intermediate with substrate; via pyruvic acid in catalysis. The residue at position 188 (Ser188) is a Pyruvic acid (Ser); by autocatalysis.

This sequence belongs to the phosphatidylserine decarboxylase family. PSD-A subfamily. Heterodimer of a large membrane-associated beta subunit and a small pyruvoyl-containing alpha subunit. Pyruvate is required as a cofactor. Post-translationally, is synthesized initially as an inactive proenzyme. Formation of the active enzyme involves a self-maturation process in which the active site pyruvoyl group is generated from an internal serine residue via an autocatalytic post-translational modification. Two non-identical subunits are generated from the proenzyme in this reaction, and the pyruvate is formed at the N-terminus of the alpha chain, which is derived from the carboxyl end of the proenzyme. The post-translation cleavage follows an unusual pathway, termed non-hydrolytic serinolysis, in which the side chain hydroxyl group of the serine supplies its oxygen atom to form the C-terminus of the beta chain, while the remainder of the serine residue undergoes an oxidative deamination to produce ammonia and the pyruvoyl prosthetic group on the alpha chain.

Its subcellular location is the cell membrane. It carries out the reaction a 1,2-diacyl-sn-glycero-3-phospho-L-serine + H(+) = a 1,2-diacyl-sn-glycero-3-phosphoethanolamine + CO2. It functions in the pathway phospholipid metabolism; phosphatidylethanolamine biosynthesis; phosphatidylethanolamine from CDP-diacylglycerol: step 2/2. Its function is as follows. Catalyzes the formation of phosphatidylethanolamine (PtdEtn) from phosphatidylserine (PtdSer). This Ruegeria sp. (strain TM1040) (Silicibacter sp.) protein is Phosphatidylserine decarboxylase proenzyme.